A 337-amino-acid chain; its full sequence is Glyceraldehyde-3-phosphate dehydrogenase 2 (337 aa).

NADP(+) contacts are provided by residues 11–12 (RI), aspartate 35, arginine 80, and threonine 122. Residues 153–155 (SCT), threonine 184, arginine 199, 212–213 (TG), and arginine 235 contribute to the D-glyceraldehyde 3-phosphate site. The active-site Nucleophile is cysteine 154. Asparagine 317 contributes to the NADP(+) binding site.

Homotetramer.

The protein localises to the cytoplasm. It carries out the reaction D-glyceraldehyde 3-phosphate + phosphate + NADP(+) = (2R)-3-phospho-glyceroyl phosphate + NADPH + H(+). The enzyme catalyses D-glyceraldehyde 3-phosphate + phosphate + NAD(+) = (2R)-3-phospho-glyceroyl phosphate + NADH + H(+). It participates in carbohydrate biosynthesis; Calvin cycle. Gap2 has a major role in carbon fixation as a component of the Calvin cycle. Catalyzes the oxidative phosphorylation of glyceraldehyde 3-phosphate (G3P) to 1,3-bisphosphoglycerate (BPG) using the cofactor NADP. The first reaction step involves the formation of a hemiacetal intermediate between G3P and a cysteine residue, and this hemiacetal intermediate is then oxidized to a thioester, with concomitant reduction of NADP to NADPH. The reduced NADPH is then exchanged with the second NAD, and the thioester is attacked by a nucleophilic inorganic phosphate to produce BPG. The protein is Glyceraldehyde-3-phosphate dehydrogenase 2 (gap2) of Nostoc sp. (strain PCC 7120 / SAG 25.82 / UTEX 2576).